The sequence spans 323 residues: D-alanine--D-alanine ligase (323 aa).

One can recognise an ATP-grasp domain in the interval 105-305 (KQQLVPRGIP…YEDLVEAIVE (201 aa)). 131–188 (PLARPYVLKPVNEGSSVGVAIVTDESNYGNPIRRDAPGPWQEFRELLAEPFIRGRELT) lines the ATP pocket. Mg(2+)-binding residues include D256, E272, and N274.

It belongs to the D-alanine--D-alanine ligase family. Mg(2+) is required as a cofactor. Mn(2+) serves as cofactor.

The protein resides in the cytoplasm. The enzyme catalyses 2 D-alanine + ATP = D-alanyl-D-alanine + ADP + phosphate + H(+). It participates in cell wall biogenesis; peptidoglycan biosynthesis. Cell wall formation. This Erythrobacter litoralis (strain HTCC2594) protein is D-alanine--D-alanine ligase.